A 63-amino-acid polypeptide reads, in one-letter code: Large ribosomal subunit protein uL29 (63 aa).

It belongs to the universal ribosomal protein uL29 family.

The chain is Large ribosomal subunit protein uL29 from Haemophilus influenzae (strain 86-028NP).